A 251-amino-acid chain; its full sequence is NADPH-dependent oxidoreductase (251 aa).

The protein belongs to the flavin oxidoreductase frp family. Requires FMN as cofactor.

Functionally, reduces FMN, organic nitro compounds and disulfide DTNB. Involved in maintenance of the cellular redox state and the disulfide stress response. This chain is NADPH-dependent oxidoreductase (nfrA), found in Staphylococcus aureus (strain MSSA476).